The following is a 389-amino-acid chain: Arrestin-C (389 aa).

This sequence belongs to the arrestin family. Retina and pineal gland.

Functionally, may play a role in an as yet undefined retina-specific signal transduction. Could bind to photoactivated-phosphorylated red/green opsins. This is Arrestin-C (arr3) from Lithobates pipiens (Northern leopard frog).